Here is a 30-residue protein sequence, read N- to C-terminus: Dermaseptin-DI4 (30 aa).

As to expression, expressed by the skin glands.

The protein localises to the secreted. Functionally, antibacterial activity against Gram-positive bacteria S.aureus and E.faecalis, and Gram-negative bacteria P.aeruginosa and E.coli. This chain is Dermaseptin-DI4, found in Phyllomedusa distincta (Monkey frog).